Reading from the N-terminus, the 65-residue chain is Large ribosomal subunit protein eL24 (65 aa).

4 residues coordinate Zn(2+): Cys-6, Cys-9, Cys-32, and Cys-36. The C4-type zinc finger occupies 6–36; it reads CAFCGADIPPGYGIMYVKSDGTVLRYCSRKC.

Belongs to the eukaryotic ribosomal protein eL24 family. In terms of assembly, part of the 50S ribosomal subunit. Forms a cluster with proteins L3 and L14. The cofactor is Zn(2+).

Its function is as follows. Binds to the 23S rRNA. This Pyrobaculum arsenaticum (strain DSM 13514 / JCM 11321 / PZ6) protein is Large ribosomal subunit protein eL24.